The primary structure comprises 195 residues: Thymidine kinase (195 aa).

ATP-binding positions include 15-22 and 88-91; these read GSMFSGKS and DEVQ. Residue Glu-89 is the Proton acceptor of the active site. Zn(2+) is bound by residues Cys-145, Cys-148, Cys-183, and Cys-186.

It belongs to the thymidine kinase family. As to quaternary structure, homotetramer.

The protein resides in the cytoplasm. It carries out the reaction thymidine + ATP = dTMP + ADP + H(+). This chain is Thymidine kinase, found in Bacillus cereus (strain ZK / E33L).